We begin with the raw amino-acid sequence, 344 residues long: Heat-inducible transcription repressor HrcA (344 aa).

Belongs to the HrcA family.

In terms of biological role, negative regulator of class I heat shock genes (grpE-dnaK-dnaJ and groELS operons). Prevents heat-shock induction of these operons. This is Heat-inducible transcription repressor HrcA from Streptococcus pyogenes serotype M6 (strain ATCC BAA-946 / MGAS10394).